The primary structure comprises 463 residues: MQHAHVIGLGKSGCAAALLLRQQGWQVELSDRNAVAAPPELVSQGVQFRLGESLDPVAWGWQTPEQRPNCIVVSPGVPWDLPGLRQAAEELQIETLGELELAWRTLSDIPWVAVTGTNGKTTTTALIAAIFERAGLQAPACGNIGFAACEVARQQQQGEAKPLDWVIAEASSYQIEAAATLAATIGLWTTFTPDHLNRHYTLENYFTIKASLLDRAQQQVLNGDDPYLRNQANATSRWPLAFWTSTQGAEALPTSRDRGFWIEEGWVIDRGDRLFPVERFSMVGNHNQQNLLMAVAAARLAGIEAEAIAEAMANFPGIAHRLERVATWQGIELINDSKATNYDAAWVGLQAVPGPTILIAGGEAKQGDDQAWLDLIQAKARAVLLIGSAAPLFARRLAEVGYSSPVENAETLDRAVPRAVELAQSLDASHVLLSPACASFDQYPNFEARGDHFRRCAQAIAKG.

Position 116–122 (116–122 (GTNGKTT)) interacts with ATP.

It belongs to the MurCDEF family.

The protein resides in the cytoplasm. The enzyme catalyses UDP-N-acetyl-alpha-D-muramoyl-L-alanine + D-glutamate + ATP = UDP-N-acetyl-alpha-D-muramoyl-L-alanyl-D-glutamate + ADP + phosphate + H(+). Its pathway is cell wall biogenesis; peptidoglycan biosynthesis. Functionally, cell wall formation. Catalyzes the addition of glutamate to the nucleotide precursor UDP-N-acetylmuramoyl-L-alanine (UMA). The chain is UDP-N-acetylmuramoylalanine--D-glutamate ligase from Synechococcus elongatus (strain ATCC 33912 / PCC 7942 / FACHB-805) (Anacystis nidulans R2).